The sequence spans 92 residues: UPF0250 protein XAC0666 (92 aa).

The protein belongs to the UPF0250 family.

The chain is UPF0250 protein XAC0666 from Xanthomonas axonopodis pv. citri (strain 306).